The sequence spans 114 residues: T cell receptor beta variable 5-6 (114 aa).

The signal sequence occupies residues 1–21 (MGPGLLCWALLCLLGAGLVDA). One can recognise an Ig-like domain in the interval 22–114 (GVTQSPTHLI…SALYLCASSL (93 aa)). A disulfide bridge links C42 with C110. The N-linked (GlcNAc...) asparagine glycan is linked to N90.

Alpha-beta TR is a heterodimer composed of an alpha and beta chain; disulfide-linked. The alpha-beta TR is associated with the transmembrane signaling CD3 coreceptor proteins to form the TR-CD3 (TcR or TCR). The assembly of alpha-beta TR heterodimers with CD3 occurs in the endoplasmic reticulum where a single alpha-beta TR heterodimer associates with one CD3D-CD3E heterodimer, one CD3G-CD3E heterodimer and one CD247 homodimer forming a stable octameric structure. CD3D-CD3E and CD3G-CD3E heterodimers preferentially associate with TR alpha and TR beta chains, respectively. The association of the CD247 homodimer is the last step of TcR assembly in the endoplasmic reticulum and is required for transport to the cell surface.

The protein resides in the cell membrane. Functionally, v region of the variable domain of T cell receptor (TR) beta chain that participates in the antigen recognition. Alpha-beta T cell receptors are antigen specific receptors which are essential to the immune response and are present on the cell surface of T lymphocytes. Recognize peptide-major histocompatibility (MH) (pMH) complexes that are displayed by antigen presenting cells (APC), a prerequisite for efficient T cell adaptive immunity against pathogens. Binding of alpha-beta TR to pMH complex initiates TR-CD3 clustering on the cell surface and intracellular activation of LCK that phosphorylates the ITAM motifs of CD3G, CD3D, CD3E and CD247 enabling the recruitment of ZAP70. In turn ZAP70 phosphorylates LAT, which recruits numerous signaling molecules to form the LAT signalosome. The LAT signalosome propagates signal branching to three major signaling pathways, the calcium, the mitogen-activated protein kinase (MAPK) kinase and the nuclear factor NF-kappa-B (NF-kB) pathways, leading to the mobilization of transcription factors that are critical for gene expression and essential for T cell growth and differentiation. The T cell repertoire is generated in the thymus, by V-(D)-J rearrangement. This repertoire is then shaped by intrathymic selection events to generate a peripheral T cell pool of self-MH restricted, non-autoaggressive T cells. Post-thymic interaction of alpha-beta TR with the pMH complexes shapes TR structural and functional avidity. This chain is T cell receptor beta variable 5-6, found in Homo sapiens (Human).